We begin with the raw amino-acid sequence, 257 residues long: MLAKRIVPCLDVRDGQVVKGVQFRNHEIIGDIVPLAKRYAEEGADELVFYDITASSDGRVVDKSWVARVAEVIDIPFCVAGGIKSVEDASRILQFGADKVSINSPALANPALITELADKFGVQCIVVGIDSYFDAETGKYQVYQFTGDESRTKATQWETRDWVLEVQKRGAGEIVLNMMNQDGVRNGYDLKQLNMVREVCHVPLIASGGAGEMVHFADAYQKANVDGALAASVFHKQIINIGELKQYLKEQNVEIRL.

Active-site residues include aspartate 11 and aspartate 130.

Belongs to the HisA/HisF family. Heterodimer of HisH and HisF.

The protein resides in the cytoplasm. It carries out the reaction 5-[(5-phospho-1-deoxy-D-ribulos-1-ylimino)methylamino]-1-(5-phospho-beta-D-ribosyl)imidazole-4-carboxamide + L-glutamine = D-erythro-1-(imidazol-4-yl)glycerol 3-phosphate + 5-amino-1-(5-phospho-beta-D-ribosyl)imidazole-4-carboxamide + L-glutamate + H(+). It participates in amino-acid biosynthesis; L-histidine biosynthesis; L-histidine from 5-phospho-alpha-D-ribose 1-diphosphate: step 5/9. Functionally, IGPS catalyzes the conversion of PRFAR and glutamine to IGP, AICAR and glutamate. The HisF subunit catalyzes the cyclization activity that produces IGP and AICAR from PRFAR using the ammonia provided by the HisH subunit. In Photobacterium profundum (strain SS9), this protein is Imidazole glycerol phosphate synthase subunit HisF.